A 318-amino-acid polypeptide reads, in one-letter code: MTPLKVVFAGTPEFARAALEAIAAAGHEIALVLSQPDRPAGRGMKLQASPVKQCAVAHGWPVAQPRSLRLDGKYPQDAAAAREALLAARPDVMVVAAYGLILPQWVLDLPVHGCLNIHASLLPRWRGAAPIHRAIEAGDAQTGITIMQMDAGLDTGDMLLREAVDIGSDTTARLHDRLAELGGRLIVQALADIGRLARTPQPAEGVTYASKVEKHEAQIDWNQPADAIVRRIRAFDPFPGANSLLDGETIKLWAAHAAPPAEVSAAPGTLLAVSDAGVAVAAAGSVVMATELQRPGGKRLAVADFLRGFDLKPGQRFG.

120 to 123 is a binding site for (6S)-5,6,7,8-tetrahydrofolate; it reads SLLP.

Belongs to the Fmt family.

It catalyses the reaction L-methionyl-tRNA(fMet) + (6R)-10-formyltetrahydrofolate = N-formyl-L-methionyl-tRNA(fMet) + (6S)-5,6,7,8-tetrahydrofolate + H(+). Attaches a formyl group to the free amino group of methionyl-tRNA(fMet). The formyl group appears to play a dual role in the initiator identity of N-formylmethionyl-tRNA by promoting its recognition by IF2 and preventing the misappropriation of this tRNA by the elongation apparatus. The sequence is that of Methionyl-tRNA formyltransferase from Variovorax paradoxus (strain S110).